The following is a 228-amino-acid chain: FCS-Like Zinc finger 12 (228 aa).

The segment at 162-205 (DFLTSCCLCKKKLQGKDIYMYKGDEGFCSKECRSLKIMEDSLKE) adopts an FLZ-type zinc-finger fold.

This sequence belongs to the FLZ family. In terms of assembly, interacts with KIN10 and KIN11 via its FLZ-type zinc finger domain. Interacts with KINB1 and KINB2 via its N-terminal part. Forms homodimer and heterodimer with FLZ2 and FLZ10 in vitro.

May act as an adapter to facilitate the interaction of SnRK1 complex with effector proteins, conferring tissue- and stimulus-type specific differences in the SnRK1 regulation pathway. The chain is FCS-Like Zinc finger 12 from Arabidopsis thaliana (Mouse-ear cress).